A 593-amino-acid polypeptide reads, in one-letter code: Proline--tRNA ligase (593 aa).

This sequence belongs to the class-II aminoacyl-tRNA synthetase family. ProS type 1 subfamily. As to quaternary structure, homodimer.

It is found in the cytoplasm. It carries out the reaction tRNA(Pro) + L-proline + ATP = L-prolyl-tRNA(Pro) + AMP + diphosphate. Functionally, catalyzes the attachment of proline to tRNA(Pro) in a two-step reaction: proline is first activated by ATP to form Pro-AMP and then transferred to the acceptor end of tRNA(Pro). As ProRS can inadvertently accommodate and process non-cognate amino acids such as alanine and cysteine, to avoid such errors it has two additional distinct editing activities against alanine. One activity is designated as 'pretransfer' editing and involves the tRNA(Pro)-independent hydrolysis of activated Ala-AMP. The other activity is designated 'posttransfer' editing and involves deacylation of mischarged Ala-tRNA(Pro). The misacylated Cys-tRNA(Pro) is not edited by ProRS. The chain is Proline--tRNA ligase from Synechococcus sp. (strain CC9605).